The primary structure comprises 90 residues: Cell division topological specificity factor (90 aa).

This sequence belongs to the MinE family.

Prevents the cell division inhibition by proteins MinC and MinD at internal division sites while permitting inhibition at polar sites. This ensures cell division at the proper site by restricting the formation of a division septum at the midpoint of the long axis of the cell. The sequence is that of Cell division topological specificity factor from Brucella abortus (strain S19).